The primary structure comprises 485 residues: Protein disulfide-isomerase 1 (485 aa).

Residues 1–20 (MSLSVSFIFLLVASIGAVVA) form the signal peptide. Thioredoxin domains are found at residues 21 to 130 (DSEN…KKSG) and 342 to 470 (YLEG…KYAG). 2 cysteine pairs are disulfide-bonded: C52/C55 and C393/C396. Catalysis depends on nucleophile residues C393 and C396. Positions 482-485 (HEEL) match the Prevents secretion from ER motif.

It belongs to the protein disulfide isomerase family.

Its subcellular location is the endoplasmic reticulum lumen. The catalysed reaction is Catalyzes the rearrangement of -S-S- bonds in proteins.. This chain is Protein disulfide-isomerase 1 (pdi-1), found in Caenorhabditis elegans.